The primary structure comprises 83 residues: uncharacterized protein (83 aa).

The helical transmembrane segment at 50-70 threads the bilayer; it reads IMVFLGEAWIILIPFAIFCII.

Belongs to the plectrovirus ORF7 family.

Its subcellular location is the host membrane. This is an uncharacterized protein from Spiroplasma melliferum (SpV1).